Consider the following 733-residue polypeptide: Lanosterol synthase (733 aa).

Residue Thr-2 is modified to N-acetylthreonine. A PFTB 1 repeat occupies 125–166 (REEMVRYLRSVQLPDGGWGLHIEDKSTVFGTALNYVALRILG). The active-site Proton donor is the Asp-456. PFTB repeat units follow at residues 484-529 (LCDA…MIDY), 561-601 (LNQG…ACMG), and 613-654 (VAQA…HSTC).

It belongs to the terpene cyclase/mutase family. Monomer.

It is found in the endoplasmic reticulum membrane. The catalysed reaction is (S)-2,3-epoxysqualene = lanosterol. The protein operates within terpene metabolism; lanosterol biosynthesis; lanosterol from farnesyl diphosphate: step 3/3. Its function is as follows. Key enzyme in the cholesterol biosynthesis pathway. Catalyzes the cyclization of (S)-2,3 oxidosqualene to lanosterol, a reaction that forms the sterol nucleus. Through the production of lanosterol may regulate lens protein aggregation and increase transparency. The chain is Lanosterol synthase from Mus musculus (Mouse).